The sequence spans 310 residues: Transcription initiation factor IIB (310 aa).

The TFIIB-type zinc-finger motif lies at 9–41 (DKQTVCPECGSTELIGDYERAEVVCAHCGLVID). Cys14, Cys17, Cys33, and Cys36 together coordinate Zn(2+). 2 tandem repeats follow at residues 127–210 (SELD…TREL) and 221–302 (DYVP…ELTE).

Belongs to the TFIIB family.

Stabilizes TBP binding to an archaeal box-A promoter. Also responsible for recruiting RNA polymerase II to the pre-initiation complex (DNA-TBP-TFIIB). This Methanobrevibacter smithii (strain ATCC 35061 / DSM 861 / OCM 144 / PS) protein is Transcription initiation factor IIB.